The following is a 556-amino-acid chain: Formate--tetrahydrofolate ligase (556 aa).

64 to 71 is a binding site for ATP; sequence TPAGEGKT.

Belongs to the formate--tetrahydrofolate ligase family.

The catalysed reaction is (6S)-5,6,7,8-tetrahydrofolate + formate + ATP = (6R)-10-formyltetrahydrofolate + ADP + phosphate. Its pathway is one-carbon metabolism; tetrahydrofolate interconversion. This chain is Formate--tetrahydrofolate ligase, found in Actinobacillus pleuropneumoniae serotype 5b (strain L20).